The following is a 426-amino-acid chain: Serine--tRNA ligase (426 aa).

Position 233–235 (233–235 (TAE)) interacts with L-serine. 264-266 (RSE) is a binding site for ATP. Glutamate 287 is an L-serine binding site. 351–354 (EISS) serves as a coordination point for ATP. Serine 387 contacts L-serine.

The protein belongs to the class-II aminoacyl-tRNA synthetase family. Type-1 seryl-tRNA synthetase subfamily. In terms of assembly, homodimer. The tRNA molecule binds across the dimer.

The protein resides in the cytoplasm. It catalyses the reaction tRNA(Ser) + L-serine + ATP = L-seryl-tRNA(Ser) + AMP + diphosphate + H(+). The enzyme catalyses tRNA(Sec) + L-serine + ATP = L-seryl-tRNA(Sec) + AMP + diphosphate + H(+). It participates in aminoacyl-tRNA biosynthesis; selenocysteinyl-tRNA(Sec) biosynthesis; L-seryl-tRNA(Sec) from L-serine and tRNA(Sec): step 1/1. Functionally, catalyzes the attachment of serine to tRNA(Ser). Is also able to aminoacylate tRNA(Sec) with serine, to form the misacylated tRNA L-seryl-tRNA(Sec), which will be further converted into selenocysteinyl-tRNA(Sec). This is Serine--tRNA ligase from Clostridium botulinum (strain Kyoto / Type A2).